The primary structure comprises 371 residues: Ferrochelatase (371 aa).

2 residues coordinate Fe cation: H218 and E299.

This sequence belongs to the ferrochelatase family.

It localises to the cytoplasm. It catalyses the reaction heme b + 2 H(+) = protoporphyrin IX + Fe(2+). It participates in porphyrin-containing compound metabolism; protoheme biosynthesis; protoheme from protoporphyrin-IX: step 1/1. Functionally, catalyzes the ferrous insertion into protoporphyrin IX. The polypeptide is Ferrochelatase (Ralstonia pickettii (strain 12J)).